Here is a 360-residue protein sequence, read N- to C-terminus: WD repeat domain phosphoinositide-interacting protein 4 (360 aa).

WD repeat units lie at residues 1–34, 40–84, 92–128, 133–174, 183–222, 227–266, and 284–329; these read MTQQ…IYNV, KGHL…IWDD, KEKL…VYSF, RKLF…LVDL, SAPF…LFDT, KLVE…IFAL, and GPMI…ICVD. The L/FRRG motif signature appears at 231-234; that stretch reads LRRG.

This sequence belongs to the WD repeat PROPPIN family. In terms of assembly, interacts with WIPI1. Interacts with WIPI2. Interacts with ATG2A and ATG2B. Interacts with ULK1. May interact with the PRKAA1, PRKAA2, PRKAB1 and PRKAG1 subunits of the AMPK kinase. May interact with NUDC. As to expression, ubiquitously expressed, with high expression in skeletal muscle and heart. Weakly expressed in liver and placenta. Expression is down-regulated in pancreatic and in kidney tumors.

Its subcellular location is the preautophagosomal structure. The protein resides in the cytoplasm. With respect to regulation, activated upon amino-acid starvation. Functionally, component of the autophagy machinery that controls the major intracellular degradation process by which cytoplasmic materials are packaged into autophagosomes and delivered to lysosomes for degradation. Binds phosphatidylinositol 3-phosphate (PtdIns3P). Activated by the STK11/AMPK signaling pathway upon starvation, WDR45 is involved in autophagosome assembly downstream of WIPI2, regulating the size of forming autophagosomes. Together with WIPI1, promotes ATG2 (ATG2A or ATG2B)-mediated lipid transfer by enhancing ATG2-association with phosphatidylinositol 3-monophosphate (PI3P)-containing membranes. Probably recruited to membranes through its PtdIns3P activity. The polypeptide is WD repeat domain phosphoinositide-interacting protein 4 (WDR45) (Homo sapiens (Human)).